Here is a 312-residue protein sequence, read N- to C-terminus: 2,3-dihydroxyphenylpropionate/2,3-dihydroxicinnamic acid 1,2-dioxygenase (312 aa).

H115 acts as the Proton donor in catalysis. Residue H179 is the Proton acceptor of the active site.

Belongs to the LigB/MhpB extradiol dioxygenase family. As to quaternary structure, homotetramer. It depends on Fe(2+) as a cofactor.

The enzyme catalyses 3-(2,3-dihydroxyphenyl)propanoate + O2 = (2Z,4E)-2-hydroxy-6-oxonona-2,4-dienedioate + H(+). It catalyses the reaction (2E)-3-(2,3-dihydroxyphenyl)prop-2-enoate + O2 = (2Z,4E,7E)-2-hydroxy-6-oxonona-2,4,7-trienedioate + H(+). Its pathway is aromatic compound metabolism; 3-phenylpropanoate degradation. In terms of biological role, catalyzes the non-heme iron(II)-dependent oxidative cleavage of 2,3-dihydroxyphenylpropionic acid and 2,3-dihydroxicinnamic acid into 2-hydroxy-6-ketononadienedioate and 2-hydroxy-6-ketononatrienedioate, respectively. This chain is 2,3-dihydroxyphenylpropionate/2,3-dihydroxicinnamic acid 1,2-dioxygenase, found in Azotobacter vinelandii (strain DJ / ATCC BAA-1303).